A 63-amino-acid chain; its full sequence is Large ribosomal subunit protein bL33m (63 aa).

The protein belongs to the bacterial ribosomal protein bL33 family.

It is found in the mitochondrion. This Dictyostelium discoideum (Social amoeba) protein is Large ribosomal subunit protein bL33m (mrpl33).